A 367-amino-acid chain; its full sequence is Probable butyrate kinase (367 aa).

It belongs to the acetokinase family.

The protein resides in the cytoplasm. It carries out the reaction butanoate + ATP = butanoyl phosphate + ADP. The polypeptide is Probable butyrate kinase (Bacillus cereus (strain ATCC 10987 / NRS 248)).